Consider the following 254-residue polypeptide: Casein kinase II subunit beta-2 (254 aa).

The protein belongs to the casein kinase 2 subunit beta family. Tetramer composed of two alpha chains, one beta chain and one beta' chain. In terms of processing, phosphorylated by alpha subunit.

In terms of biological role, regulatory subunit of casein kinase II/CK2. As part of the kinase complex regulates the basal catalytic activity of the alpha subunit a constitutively active serine/threonine-protein kinase that phosphorylates a large number of substrates containing acidic residues C-terminal to the phosphorylated serine or threonine. The polypeptide is Casein kinase II subunit beta-2 (Schizosaccharomyces pombe (strain 972 / ATCC 24843) (Fission yeast)).